The primary structure comprises 101 residues: MKKWSDTEVFEMLKRMYARVYGLVQGVGFRKFVQIHAIRLGIKGYAKNLPDGSVEVVAEGYEEALSKLLERIKQGPPAAEVEKVDYSFSEYKGEFEDFETY.

Residues 15–101 enclose the Acylphosphatase-like domain; sequence RMYARVYGLV…KGEFEDFETY (87 aa). Active-site residues include Arg30 and Asn48.

Belongs to the acylphosphatase family.

The catalysed reaction is an acyl phosphate + H2O = a carboxylate + phosphate + H(+). The chain is Acylphosphatase (acyP) from Saccharolobus solfataricus (strain ATCC 35092 / DSM 1617 / JCM 11322 / P2) (Sulfolobus solfataricus).